Consider the following 324-residue polypeptide: Signal peptidase I (324 aa).

At 1–3 the chain is on the periplasmic side; it reads MAN. Residues 4 to 22 form a helical membrane-spanning segment; sequence MFALILVIATLVTGILWCV. The Cytoplasmic segment spans residues 23 to 58; it reads DKFVFAPKRRARQAAAQTASGDALDNATLNKVAPKP. The chain crosses the membrane as a helical span at residues 59 to 77; that stretch reads GWLETGASVFPVLAIVLIV. At 78-324 the chain is on the periplasmic side; sequence RSFLYEPFQI…VRLSRIGGIH (247 aa). Residues Ser91 and Lys146 contribute to the active site.

Belongs to the peptidase S26 family.

The protein resides in the cell inner membrane. The enzyme catalyses Cleavage of hydrophobic, N-terminal signal or leader sequences from secreted and periplasmic proteins.. This chain is Signal peptidase I (lepB), found in Salmonella typhi.